The chain runs to 92 residues: Ribonuclease P protein component 1 (92 aa).

Belongs to the eukaryotic/archaeal RNase P protein component 1 family. As to quaternary structure, consists of a catalytic RNA component and at least 4-5 protein subunits.

It is found in the cytoplasm. It carries out the reaction Endonucleolytic cleavage of RNA, removing 5'-extranucleotides from tRNA precursor.. In terms of biological role, part of ribonuclease P, a protein complex that generates mature tRNA molecules by cleaving their 5'-ends. This Desulfurococcus amylolyticus (strain DSM 18924 / JCM 16383 / VKM B-2413 / 1221n) (Desulfurococcus kamchatkensis) protein is Ribonuclease P protein component 1.